The following is a 316-amino-acid chain: tRNA dimethylallyltransferase (316 aa).

Position 17-24 (17-24 (GPTASGKT)) interacts with ATP. 19–24 (TASGKT) serves as a coordination point for substrate. Interaction with substrate tRNA stretches follow at residues 42–45 (DSAL), 166–170 (QRLSR), 247–252 (RCVGYR), and 280–287 (KRQITWLR).

This sequence belongs to the IPP transferase family. Monomer. Mg(2+) is required as a cofactor.

The catalysed reaction is adenosine(37) in tRNA + dimethylallyl diphosphate = N(6)-dimethylallyladenosine(37) in tRNA + diphosphate. Catalyzes the transfer of a dimethylallyl group onto the adenine at position 37 in tRNAs that read codons beginning with uridine, leading to the formation of N6-(dimethylallyl)adenosine (i(6)A). This is tRNA dimethylallyltransferase from Escherichia coli O81 (strain ED1a).